A 374-amino-acid polypeptide reads, in one-letter code: Chaperone protein DnaJ (374 aa).

In terms of domain architecture, J spans 5–70 (DYYEVLGVNL…RKRASYDQFG (66 aa)). A CR-type zinc finger spans residues 133-210 (GLSRTIKVPT…CHGQGRQQQT (78 aa)). Zn(2+) is bound by residues C146, C149, C162, C165, C184, C187, C198, and C201. CXXCXGXG motif repeat units follow at residues 146 to 153 (CKTCNGSG), 162 to 169 (CPRCNGSG), 184 to 191 (CSVCRGRG), and 198 to 205 (CTDCHGQG).

This sequence belongs to the DnaJ family. As to quaternary structure, homodimer. Zn(2+) is required as a cofactor.

It is found in the cytoplasm. Its function is as follows. Participates actively in the response to hyperosmotic and heat shock by preventing the aggregation of stress-denatured proteins and by disaggregating proteins, also in an autonomous, DnaK-independent fashion. Unfolded proteins bind initially to DnaJ; upon interaction with the DnaJ-bound protein, DnaK hydrolyzes its bound ATP, resulting in the formation of a stable complex. GrpE releases ADP from DnaK; ATP binding to DnaK triggers the release of the substrate protein, thus completing the reaction cycle. Several rounds of ATP-dependent interactions between DnaJ, DnaK and GrpE are required for fully efficient folding. Also involved, together with DnaK and GrpE, in the DNA replication of plasmids through activation of initiation proteins. The sequence is that of Chaperone protein DnaJ from Coxiella burnetii (strain RSA 493 / Nine Mile phase I).